The sequence spans 394 residues: Succinate--CoA ligase [ADP-forming] subunit beta (394 aa).

One can recognise an ATP-grasp domain in the interval K9–A243. ATP is bound by residues K45, G52–G54, E98, V101, and E106. Residues N198 and D212 each coordinate Mg(2+). Substrate contacts are provided by residues N263 and G320–M322.

The protein belongs to the succinate/malate CoA ligase beta subunit family. As to quaternary structure, heterotetramer of two alpha and two beta subunits. The cofactor is Mg(2+).

The enzyme catalyses succinate + ATP + CoA = succinyl-CoA + ADP + phosphate. It catalyses the reaction GTP + succinate + CoA = succinyl-CoA + GDP + phosphate. Its pathway is carbohydrate metabolism; tricarboxylic acid cycle; succinate from succinyl-CoA (ligase route): step 1/1. Succinyl-CoA synthetase functions in the citric acid cycle (TCA), coupling the hydrolysis of succinyl-CoA to the synthesis of either ATP or GTP and thus represents the only step of substrate-level phosphorylation in the TCA. The beta subunit provides nucleotide specificity of the enzyme and binds the substrate succinate, while the binding sites for coenzyme A and phosphate are found in the alpha subunit. In Pelobacter propionicus (strain DSM 2379 / NBRC 103807 / OttBd1), this protein is Succinate--CoA ligase [ADP-forming] subunit beta.